We begin with the raw amino-acid sequence, 1048 residues long: Dyslexia-associated protein KIAA0319-like protein (1048 aa).

Residues 1 to 29 (MEKRLGVKPSPASWVLPGYCWQTSVKLPR) lie on the Cytoplasmic side of the membrane. Residues 30–50 (SLYLLYSFFCFSVLWLSTDAD) form a helical membrane-spanning segment. Residues 49–127 (ADESRCQQGK…PFRTDSSNSM (79 aa)) enclose the MANSC domain. Topologically, residues 51–928 (ESRCQQGKTL…RDGDSNCEWS (878 aa)) are extracellular. 2 disordered regions span residues 198-218 (HGAM…LSPT) and 231-300 (SFTS…STSA). The span at 231–241 (SFTSNHTTQTP) shows a compositional bias: polar residues. Asparagine 246 is a glycosylation site (N-linked (GlcNAc...) asparagine). 2 stretches are compositionally biased toward low complexity: residues 247–261 (VSIH…SPVS) and 287–300 (ATPT…STSA). 5 consecutive PKD domains span residues 309–400 (VVSA…VKPE), 408–497 (VAVV…VNKA), 503–593 (VANA…VQPE), 599–687 (QADA…VKEE), and 693–784 (VAKI…VKPD). N-linked (GlcNAc...) asparagine glycosylation is present at asparagine 394. The disordered stretch occupies residues 593–623 (ENNKPPQADAGPDKELTLPVDSTTLDGSKST). A helical membrane pass occupies residues 929–949 (VLYVIIASFVIVVALGILSWT). Residues 950 to 1048 (TICCCKRQKG…KSRSAREEIL (99 aa)) are Cytoplasmic-facing. Threonine 973 carries the post-translational modification Phosphothreonine. Serine 977 is subject to Phosphoserine. Residues 980–1007 (LKPTSRAGSKQKGPTLSSSLMHSESELD) form a disordered region. Residues 985–994 (RAGSKQKGPT) show a composition bias toward polar residues. Phosphoserine occurs at positions 1008 and 1030. The disordered stretch occupies residues 1024 to 1048 (LYGQNGSVPNGQTPLKSRSAREEIL). Over residues 1027–1039 (QNGSVPNGQTPLK) the composition is skewed to polar residues. Residue threonine 1036 is modified to Phosphothreonine.

In terms of assembly, interacts with RTN4R. N-glycosylated.

Its subcellular location is the cytoplasmic granule membrane. The protein localises to the golgi apparatus membrane. It is found in the golgi apparatus. The protein resides in the trans-Golgi network membrane. It localises to the cell membrane. In terms of biological role, possible role in axon guidance through interaction with RTN4R. (Microbial infection) Acts as a receptor for adeno-associated virus and is involved in adeno-associated virus infection through endocytosis system. The sequence is that of Dyslexia-associated protein KIAA0319-like protein from Mus musculus (Mouse).